A 288-amino-acid polypeptide reads, in one-letter code: NAD(P)H-hydrate epimerase (288 aa).

Residues 1–32 (MSGLRALLGLGLLVAGSRLSRVRVQAGSCRAG) constitute a mitochondrion transit peptide. Residue S49 is modified to Phosphoserine. In terms of domain architecture, YjeF N-terminal spans 65–275 (AQAVDQELFN…ALEKKYQLNL (211 aa)). 119 to 123 (NNGGD) serves as a coordination point for (6S)-NADPHX. N120 is a K(+) binding site. K144 is modified (N6-succinyllysine). A K(+)-binding site is contributed by D185. (6S)-NADPHX is bound by residues 189–195 (GFSFTGE) and D218. S221 contributes to the K(+) binding site.

It belongs to the NnrE/AIBP family. Homodimer. Interacts with APOA1 and APOA2. Requires K(+) as cofactor. In terms of processing, undergoes physiological phosphorylation during sperm capacitation, downstream to PKA activation.

The protein resides in the mitochondrion. The protein localises to the secreted. The enzyme catalyses (6R)-NADHX = (6S)-NADHX. It carries out the reaction (6R)-NADPHX = (6S)-NADPHX. Functionally, catalyzes the epimerization of the S- and R-forms of NAD(P)HX, a damaged form of NAD(P)H that is a result of enzymatic or heat-dependent hydration. This is a prerequisite for the S-specific NAD(P)H-hydrate dehydratase to allow the repair of both epimers of NAD(P)HX. Accelerates cholesterol efflux from endothelial cells to high-density lipoprotein (HDL) and thereby regulates angiogenesis. This chain is NAD(P)H-hydrate epimerase, found in Bos taurus (Bovine).